Reading from the N-terminus, the 92-residue chain is C-C motif chemokine 4 (92 aa).

An N-terminal signal peptide occupies residues 1–23 (MKLCVTVLSLLVLMAAFCSPALS). 2 disulfide bridges follow: cysteine 34–cysteine 58 and cysteine 35–cysteine 74.

It belongs to the intercrine beta (chemokine CC) family. In terms of assembly, homodimer. Interacts with CCR5.

The protein localises to the secreted. Its function is as follows. Monokine with inflammatory and chemokinetic properties. The protein is C-C motif chemokine 4 (CCL4) of Bos taurus (Bovine).